The following is a 2291-amino-acid chain: Protein Ycf2 B (2291 aa).

1642–1649 (GSIGTGRS) serves as a coordination point for ATP.

The protein belongs to the Ycf2 family.

The protein localises to the plastid. Its subcellular location is the chloroplast stroma. In terms of biological role, probable ATPase of unknown function. Its presence in a non-photosynthetic plant (Epifagus virginiana) and experiments in tobacco indicate that it has an essential function which is probably not related to photosynthesis. This Atropa belladonna (Belladonna) protein is Protein Ycf2 B (ycf2-B).